The chain runs to 196 residues: DnaA initiator-associating protein DiaA (196 aa).

The SIS domain maps to 34 to 196; the sequence is LVQSLLNGNK…DNTLFPHQDD (163 aa).

This sequence belongs to the SIS family. DiaA subfamily. Homotetramer; dimer of dimers.

Its function is as follows. Required for the timely initiation of chromosomal replication via direct interactions with the DnaA initiator protein. This Shigella boydii serotype 18 (strain CDC 3083-94 / BS512) protein is DnaA initiator-associating protein DiaA.